The following is a 512-amino-acid chain: ATP synthase subunit alpha 1 (512 aa).

Residue 169 to 176 (GDRQTGKT) participates in ATP binding.

It belongs to the ATPase alpha/beta chains family. In terms of assembly, F-type ATPases have 2 components, CF(1) - the catalytic core - and CF(0) - the membrane proton channel. CF(1) has five subunits: alpha(3), beta(3), gamma(1), delta(1), epsilon(1). CF(0) has four main subunits: a(1), b(1), b'(1) and c(9-12).

The protein resides in the cell inner membrane. The catalysed reaction is ATP + H2O + 4 H(+)(in) = ADP + phosphate + 5 H(+)(out). Its function is as follows. Produces ATP from ADP in the presence of a proton gradient across the membrane. The alpha chain is a regulatory subunit. The sequence is that of ATP synthase subunit alpha 1 from Cereibacter sphaeroides (strain ATCC 17029 / ATH 2.4.9) (Rhodobacter sphaeroides).